The following is a 265-amino-acid chain: (-)-isopiperitenol/(-)-carveol dehydrogenase, mitochondrial (265 aa).

The transit peptide at 1–30 (MASVKKLAGKVAIVTGGASGIGEVTARLFA) directs the protein to the mitochondrion. 13-38 (IVTGGASGIGEVTARLFAERGARAVV) serves as a coordination point for NAD(+). Position 147 (S147) interacts with substrate. The active-site Proton acceptor is Y160.

This sequence belongs to the short-chain dehydrogenases/reductases (SDR) family. As to quaternary structure, homodimer and homotetramer. Peltate glandular trichomes.

It localises to the mitochondrion. It carries out the reaction (1S,6R)-isopiperitenol + NAD(+) = (6R)-isopiperitenone + NADH + H(+). It catalyses the reaction (1S,5R)-carveol + NADP(+) = (R)-carvone + NADPH + H(+). Its function is as follows. Involved in the biosynthesis of menthol and related monoterpenes in leaves. Can use (-)-trans-carveol and, with a lower relative velocity, (-)-trans-isopiperitenol, (+)-neomenthol, (+)-neoisomenthol and (-)-cis-isopiperitenol as substrates, but not (-)-cis-carvenol, (-)-menthol, (+)-isomenthol, 7-hydroxy-limonene, (-)-isopiperitenone or (-)-carvone. The chain is (-)-isopiperitenol/(-)-carveol dehydrogenase, mitochondrial from Mentha piperita (Peppermint).